Consider the following 129-residue polypeptide: Antimicrobial peptide NK-lysin (129 aa).

The first 6 residues, 1–6 (PGLAFS), serve as a signal peptide directing secretion. Positions 7 to 46 (GLTPEHSALARAHPCDGEQFCQNLAPEDPQGDQLLQREEL) are excised as a propeptide. Residues 46–126 (LGLICESCRK…VDIKICKEKT (81 aa)) enclose the Saposin B-type domain. Disulfide bonds link Cys50/Cys122, Cys53/Cys116, and Cys81/Cys91. Residues 125-129 (KTGLI) constitute a propeptide that is removed on maturation.

In terms of tissue distribution, cytotoxic T and NK cells.

It localises to the secreted. May be an effector molecule of cytotoxic activity. High activity against E.coli and B.megaterium, moderate against A.calcoaceticus and S.pyogenes. No activity against P.aeruginosa, S.aureus and Salmonella. Has some antifungal activity against C.albicans. The protein is Antimicrobial peptide NK-lysin (NKL) of Sus scrofa (Pig).